The primary structure comprises 147 residues: ATP synthase epsilon chain 2 (147 aa).

Belongs to the ATPase epsilon chain family. As to quaternary structure, F-type ATPases have 2 components, CF(1) - the catalytic core - and CF(0) - the membrane proton channel. CF(1) has five subunits: alpha(3), beta(3), gamma(1), delta(1), epsilon(1). CF(0) has three main subunits: a, b and c.

Its subcellular location is the cell inner membrane. Produces ATP from ADP in the presence of a proton gradient across the membrane. The chain is ATP synthase epsilon chain 2 from Photobacterium profundum (strain SS9).